The following is a 406-amino-acid chain: LIM/homeobox protein Lhx2 (406 aa).

2 consecutive LIM zinc-binding domains span residues 53–105 and 115–168; these read CAGC…CKED and CARC…CRLH. The segment at 250-270 is disordered; that stretch reads DAEHLDRDQPYPSSQKTKRMR. Positions 266–325 form a DNA-binding region, homeobox; sequence TKRMRTSFKHHQLRTMKSYFAINHNPDAKDLKQLAQKTGLTKRVLQVWFQNARAKFRRNL. The Nuclear localization signal signature appears at 307–323; sequence KRVLQVWFQNARAKFRR. The span at 328 to 356 shows a compositional bias: polar residues; it reads QENTGVDKTSDATLQTGTPSGPASELSNA. 2 disordered regions span residues 328–375 and 387–406; these read QENT…SPTL and GNLEGHEPHSPSQTTLTNLF. Low complexity predominate over residues 357-375; it reads SLSPSSTPTTLTDLTSPTL. The segment covering 396–406 has biased composition (polar residues); it reads SPSQTTLTNLF.

Interacts (via LIM domains) with CITED2. Interacts with POU4F2 isoform 1.

It is found in the nucleus. Functionally, acts as a transcriptional activator. Stimulates the promoter of the alpha-glycoprotein gene. Transcriptional regulatory protein involved in the control of cell differentiation in developing lymphoid and neural cell types. This is LIM/homeobox protein Lhx2 (Lhx2) from Mus musculus (Mouse).